Here is a 698-residue protein sequence, read N- to C-terminus: Ubiquitin-like modifier-activating enzyme ATG7 (698 aa).

Positions 11 to 13 (FAP) match the FAP motif motif. K41 is covalently cross-linked (Glycyl lysine isopeptide (Lys-Gly) (interchain with G-Cter in ubiquitin)). C567 serves as the catalytic Glycyl thioester intermediate. S693 carries the phosphoserine modification.

Belongs to the ATG7 family. In terms of assembly, homodimer. Interacts with ATG3; this interaction is essential for the transfer of ATG8-like proteins's thioester from ATG7 to ATG3 and plays a role in the conjugation of ATG12 to ATG5. Interacts with ATG12. Interacts with ATG10. Forms intermediate conjugates with GABARAPL1. Forms intermediate conjugates with ATG8-like proteins such as GABARAP, GABARAPL2 or MAP1LC3A. Interacts with EP300 acetyltransferase. Interacts with FOXO1. Post-translationally, acetylated by EP300. In terms of processing, polyubiquitinated on Lys-41 via 'Lys-63'-linked ubiquitin by TRIM32; this modification positiely regulates ATG8 and ATG12 activating enzyme activity leading to initiation of autophagy under metabolic stress. Widely expressed, especially in kidney, liver, lymph nodes and bone marrow.

It localises to the cytoplasm. Its subcellular location is the preautophagosomal structure. Functionally, E1-like activating enzyme involved in the 2 ubiquitin-like systems required for cytoplasm to vacuole transport (Cvt) and autophagy. Activates ATG12 for its conjugation with ATG5 as well as the ATG8 family proteins for their conjugation with phosphatidylethanolamine. Both systems are needed for the ATG8 association to Cvt vesicles and autophagosomes membranes. Facilitates LC3-I lipidation with phosphatidylethanolamine to form LC3-II which is found on autophagosomal membranes. Required for autophagic death induced by caspase-8 inhibition. Required for mitophagy which contributes to regulate mitochondrial quantity and quality by eliminating the mitochondria to a basal level to fulfill cellular energy requirements and preventing excess ROS production. Modulates p53/TP53 activity to regulate cell cycle and survival during metabolic stress. Also plays a key role in the maintenance of axonal homeostasis, the prevention of axonal degeneration, the maintenance of hematopoietic stem cells, the formation of Paneth cell granules, as well as in adipose differentiation. Plays a role in regulating the liver clock and glucose metabolism by mediating the autophagic degradation of CRY1 (clock repressor) in a time-dependent manner. In Mus musculus (Mouse), this protein is Ubiquitin-like modifier-activating enzyme ATG7.